Consider the following 185-residue polypeptide: MTLKELYAETRSHMQKSLEVLEHNLAGLRTGRANPALLLHLKVEYYGAHVPLNQIATVTAPDPRTLVVQSWDQNALKAIEKAIRDSDLGLNPSNKGDALYINIPPLTEERRKDLVRAVRQYAEEGRVAIRNIRREALDKLKKLAKELHLSEDETKRAEAEIQKITDEFIAKADQLAEKKEQEILG.

This sequence belongs to the RRF family.

Its subcellular location is the cytoplasm. Its function is as follows. Responsible for the release of ribosomes from messenger RNA at the termination of protein biosynthesis. May increase the efficiency of translation by recycling ribosomes from one round of translation to another. The polypeptide is Ribosome-recycling factor (Thermus thermophilus (strain ATCC BAA-163 / DSM 7039 / HB27)).